The following is a 766-amino-acid chain: LPS-assembly protein LptD (766 aa).

Positions 1 to 18 are cleaved as a signal peptide; it reads MQIRYFLALSLLPNIVLA.

Belongs to the LptD family. In terms of assembly, component of the lipopolysaccharide transport and assembly complex. Interacts with LptE and LptA.

It is found in the cell outer membrane. Its function is as follows. Together with LptE, is involved in the assembly of lipopolysaccharide (LPS) at the surface of the outer membrane. The protein is LPS-assembly protein LptD of Shewanella frigidimarina (strain NCIMB 400).